We begin with the raw amino-acid sequence, 415 residues long: Methylthioribose-1-phosphate isomerase (415 aa).

Asp284 functions as the Proton donor in the catalytic mechanism.

Belongs to the eIF-2B alpha/beta/delta subunits family. MtnA subfamily.

The protein resides in the cytoplasm. Its subcellular location is the nucleus. The enzyme catalyses 5-(methylsulfanyl)-alpha-D-ribose 1-phosphate = 5-(methylsulfanyl)-D-ribulose 1-phosphate. It participates in amino-acid biosynthesis; L-methionine biosynthesis via salvage pathway; L-methionine from S-methyl-5-thio-alpha-D-ribose 1-phosphate: step 1/6. In terms of biological role, catalyzes the interconversion of methylthioribose-1-phosphate (MTR-1-P) into methylthioribulose-1-phosphate (MTRu-1-P). The polypeptide is Methylthioribose-1-phosphate isomerase (Candida glabrata (strain ATCC 2001 / BCRC 20586 / JCM 3761 / NBRC 0622 / NRRL Y-65 / CBS 138) (Yeast)).